Here is a 1214-residue protein sequence, read N- to C-terminus: MPVSLAVCETANVVNAALRESLGSGIGGGGGCVAAAASRSSAGSGSGSVAGVDEAKIGDVSGTDNLQSQIVANAKRVLLAKIEYEEVENYHESVLAKLKSKYIVIKPDNNNGAANCNYKTNGKAVGSNGHDNNTVNGGTVNGNRKQTVDSGQSNQNSSANPNELPKPKRVLYPRENIRIGWKQSERKWQVGAGMLNVGNTCYLNSTLQALFHIPALANWLVSETSHVENCNISESCGSGGCIICAMAKTLQTTQSNQSAVRPFLIYTKLRQICKHMVVGRQEDAHEFLRFLVEAMEKAYLMRFRNFKELDQLVKETTPISQIFGGYLRSEVRCLSCNHVSITFQHFQDLLLDIRKADTLEEAFDGYFSRERLEDMGYKCEGCKKKVSATKQFSLERAPITLCIQLKRFSMMGNKLTKQISFKPRIDLSRFAARSPTAAAQPLSYRLVSMVTHLGVSQHCGHYTAIGLTEAGSYYNFDDSYVKPIAMQSVCNTNAYIMFYELDVANSSSSSTINNNSSSSSNNSVAPKLNGLRLSNGAHSPAAATVAVAATATSTSASAVSPRFIGPQLPNGYANSNGHALGGAKTTIQFKTTPQKQLQQQQQQQNGLLMGANKFQESSQSKHSLAGTLHKGEAAPNANTNANANKSSCNNNITSQHQQQHILPISSDEDEDEDDSDDDDDDDDDDVKANTAPQLPSMPKMFEDSESVAQTAKLKPKTPLKSLVPYESASEEEQEQQQQQQQQQLLQTPQQLAANPRKRRSGSDSSESEEEAPPPLPSILRNGHAKTNGSVSNTSNSSHSKAKSASNASSANVNSSKQKTDAIDEIFKSLNNYKNKHRIAADDDEDGDGDGDGHGNEQVQTEQGTKKLNSASSASASKSNGWQSQNGKAPSSPKTPPSPAVIKSKTGIWQITRTNDDDDEEDEEEDDVEADADQEDDDDEVVVVEEPQVSVTPKNPKNPFAASKSAEANATIAGAKRQKLLNGSAKSAATTRPGNGYQSESVANGSAVSELLKQNHRGYGTSVLSWNGKPSELDKESFDLVCAKRIAGHGDTDVHSDVNSSSNNSSNINSNSNSNSNGNGKRKNSTLLAEAREQRKRDAEDEEENEMDRGRQRKVKSASVKSNNSTPGYNPFQEFENQKRWHSNKSGTFPRFYHQNNRPNFQQRNKFKFNRFGGGAKFQQQRALQRHLAAGGGFTRRQQQSTGQQQQQQQQQQQS.

The disordered stretch occupies residues 124–169 (AVGSNGHDNNTVNGGTVNGNRKQTVDSGQSNQNSSANPNELPKPKR). Low complexity predominate over residues 132–143 (NNTVNGGTVNGN). Polar residues predominate over residues 144–161 (RKQTVDSGQSNQNSSANP). Positions 192–502 (AGMLNVGNTC…NAYIMFYELD (311 aa)) constitute a USP domain. The active-site Nucleophile is Cys-201. His-461 (proton acceptor) is an active-site residue. The segment covering 509-523 (SSTINNNSSSSSNNS) has biased composition (low complexity). The tract at residues 509–532 (SSTINNNSSSSSNNSVAPKLNGLR) is disordered. Phosphoserine is present on residues Ser-553 and Ser-555. 5 disordered regions span residues 631-819 (GEAA…KQKT), 836-964 (HRIA…ASKS), 977-1001 (QKLL…SESV), 1048-1161 (HGDT…PNFQ), and 1176-1214 (KFQQ…QQQS). The segment covering 633 to 651 (AAPNANTNANANKSSCNNN) has biased composition (low complexity). A compositionally biased stretch (acidic residues) spans 666-685 (SDEDEDEDDSDDDDDDDDDD). A Phosphothreonine modification is found at Thr-717. 2 positions are modified to phosphoserine: Ser-727 and Ser-729. Low complexity-rich tracts occupy residues 735-751 (QQQQ…PQQL) and 785-816 (KTNG…NSSK). Residues 856 to 868 (EQVQTEQGTKKLN) are compositionally biased toward polar residues. Positions 869-878 (SASSASASKS) are enriched in low complexity. Ser-891 is subject to Phosphoserine. Thr-894 bears the Phosphothreonine mark. Ser-897 is modified (phosphoserine). Acidic residues predominate over residues 915-942 (DDDDEEDEEEDDVEADADQEDDDDEVVV). Thr-951 bears the Phosphothreonine mark. Residues 983–1001 (SAKSAATTRPGNGYQSESV) are compositionally biased toward polar residues. Residues 1058–1076 (NSSSNNSSNINSNSNSNSN) show a composition bias toward low complexity. Positions 1089–1098 (EAREQRKRDA) are enriched in basic and acidic residues. Low complexity-rich tracts occupy residues 1178 to 1188 (QQQRALQRHLA) and 1197 to 1214 (QQQS…QQQS).

Belongs to the peptidase C19 family. In terms of assembly, interacts with atms/PAF1, but not with CycT.

The protein resides in the nucleus. Its subcellular location is the nucleolus. It carries out the reaction Thiol-dependent hydrolysis of ester, thioester, amide, peptide and isopeptide bonds formed by the C-terminal Gly of ubiquitin (a 76-residue protein attached to proteins as an intracellular targeting signal).. Its function is as follows. Required for maintaining multiple types of adult stem cells, including male and female germline, epithelial follicle cell and intestinal stem cells. May function as a transcriptional repressor by continually deubiquiting histone H2B at the promoters of genes critical for cellular differentiation, thereby preventing histone H3 'Lys-4' trimethylation (H3K4). Controls selective autophagy activation by ubiquitinated proteins. The polypeptide is Ubiquitin carboxyl-terminal hydrolase 36 (Usp36) (Drosophila virilis (Fruit fly)).